The chain runs to 332 residues: MITQIGSTSSERRCAICSKLGNSYNYGVLSCNACKMFFRRATLGKSEKFCINNDNCDTSNLILTCRQCRYNKCLKMGMRIVTNQYDSLDDIIKVLAKWNLDRSNKLMNFQCFEDPTLDQVIQKHPVFTKKPSNLSFSKSEWGFMEQLTTVEFMSKFEFTRHLFSEDFRIVLKSSCFKIASFIKAVRSYSMKKEDIRYPDGELIVPMELVPFCTSEFLARVQCRLIGRIIELKLKEEEFLLLIAIFVCDPTANNLTARGREILSFHQNVYNDALLQLCLRNEGSCGPARFNDLLSVCHVVNKHVEDIGQLCFMFSFHPPTTKYKRLCAELLGA.

A DNA-binding region (nuclear receptor) is located at residues glutamate 11–tyrosine 85. 2 consecutive NR C4-type zinc fingers follow at residues cysteine 14–cysteine 34 and cysteine 50–cysteine 73. The NR LBD domain occupies aspartate 101–alanine 332.

This sequence belongs to the nuclear hormone receptor family.

It localises to the nucleus. Its function is as follows. Orphan nuclear receptor. The polypeptide is Nuclear hormone receptor family member nhr-9 (nhr-9) (Caenorhabditis elegans).